The primary structure comprises 636 residues: Biosynthetic arginine decarboxylase (636 aa).

The residue at position 101 (Lys101) is an N6-(pyridoxal phosphate)lysine. 286–296 (FDVGGGLAVDY) contributes to the substrate binding site.

This sequence belongs to the Orn/Lys/Arg decarboxylase class-II family. SpeA subfamily. Requires Mg(2+) as cofactor. Pyridoxal 5'-phosphate is required as a cofactor.

The enzyme catalyses L-arginine + H(+) = agmatine + CO2. The protein operates within amine and polyamine biosynthesis; agmatine biosynthesis; agmatine from L-arginine: step 1/1. Its function is as follows. Catalyzes the biosynthesis of agmatine from arginine. The chain is Biosynthetic arginine decarboxylase from Shewanella denitrificans (strain OS217 / ATCC BAA-1090 / DSM 15013).